The following is a 272-amino-acid chain: Ribosomal RNA small subunit methyltransferase A (272 aa).

The S-adenosyl-L-methionine site is built by asparagine 18, leucine 20, glycine 45, glutamate 66, aspartate 91, and asparagine 113.

This sequence belongs to the class I-like SAM-binding methyltransferase superfamily. rRNA adenine N(6)-methyltransferase family. RsmA subfamily.

It localises to the cytoplasm. It catalyses the reaction adenosine(1518)/adenosine(1519) in 16S rRNA + 4 S-adenosyl-L-methionine = N(6)-dimethyladenosine(1518)/N(6)-dimethyladenosine(1519) in 16S rRNA + 4 S-adenosyl-L-homocysteine + 4 H(+). Its function is as follows. Specifically dimethylates two adjacent adenosines (A1518 and A1519) in the loop of a conserved hairpin near the 3'-end of 16S rRNA in the 30S particle. May play a critical role in biogenesis of 30S subunits. The polypeptide is Ribosomal RNA small subunit methyltransferase A (Proteus mirabilis (strain HI4320)).